Here is a 125-residue protein sequence, read N- to C-terminus: Fluoride-specific ion channel FluC (125 aa).

A run of 4 helical transmembrane segments spans residues 5 to 25 (LLVALGGALGSLLRYGLGALV), 29 to 49 (LGAGFPWSTLFVNALGSFLIG), 66 to 86 (LFLAVGVLGGFTTFSSLSYET), and 95 to 115 (VGKALLYAFGSLFLGLFLAFL). Gly-74 and Thr-77 together coordinate Na(+).

Belongs to the fluoride channel Fluc/FEX (TC 1.A.43) family.

Its subcellular location is the cell inner membrane. The enzyme catalyses fluoride(in) = fluoride(out). Its activity is regulated as follows. Na(+) is not transported, but it plays an essential structural role and its presence is essential for fluoride channel function. Functionally, fluoride-specific ion channel. Important for reducing fluoride concentration in the cell, thus reducing its toxicity. The polypeptide is Fluoride-specific ion channel FluC (Thermus thermophilus (strain ATCC 27634 / DSM 579 / HB8)).